The primary structure comprises 416 residues: Exodeoxyribonuclease 7 large subunit (416 aa).

The segment at 1–21 (MTEPDSKPKKGRAGRKKAEPV) is disordered.

Belongs to the XseA family. Heterooligomer composed of large and small subunits.

The protein resides in the cytoplasm. The catalysed reaction is Exonucleolytic cleavage in either 5'- to 3'- or 3'- to 5'-direction to yield nucleoside 5'-phosphates.. Bidirectionally degrades single-stranded DNA into large acid-insoluble oligonucleotides, which are then degraded further into small acid-soluble oligonucleotides. The polypeptide is Exodeoxyribonuclease 7 large subunit (Deinococcus radiodurans (strain ATCC 13939 / DSM 20539 / JCM 16871 / CCUG 27074 / LMG 4051 / NBRC 15346 / NCIMB 9279 / VKM B-1422 / R1)).